The sequence spans 286 residues: uncharacterized protein (286 aa).

Residues 1–47 (MAIPFLHKGGSDDSTHHHTHDYDHHNHDHHGHDHHSHDSSSNSSSEA) form a disordered region. Over residues 9–26 (GGSDDSTHHHTHDYDHHN) the composition is skewed to basic and acidic residues. 93 to 100 (GPVGSGKT) contributes to the GTP binding site.

Belongs to the SIMIBI class G3E GTPase family. UreG subfamily.

The protein resides in the cytoplasm. The protein localises to the nucleus. Functionally, probably facilitates nickel incorporation. This is an uncharacterized protein from Schizosaccharomyces pombe (strain 972 / ATCC 24843) (Fission yeast).